A 186-amino-acid chain; its full sequence is TATA-box-binding protein (186 aa).

Tandem repeats lie at residues 10 to 86 and 101 to 179.

The protein belongs to the TBP family.

In terms of biological role, general factor that plays a role in the activation of archaeal genes transcribed by RNA polymerase. Binds specifically to the TATA box promoter element which lies close to the position of transcription initiation. The protein is TATA-box-binding protein of Haloarcula marismortui (strain ATCC 43049 / DSM 3752 / JCM 8966 / VKM B-1809) (Halobacterium marismortui).